The following is a 125-amino-acid chain: SOSS complex subunit C homolog A (125 aa).

Positions 1-16 are enriched in polar residues; sequence MAFPNTSAQQAETNSK. Disordered stretches follow at residues 1 to 20, 38 to 74, and 105 to 125; these read MAFP…SLEE, SNTN…AAFN, and PATP…NNPK.

This sequence belongs to the SOSS-C family.

The chain is SOSS complex subunit C homolog A from Drosophila willistoni (Fruit fly).